A 95-amino-acid chain; its full sequence is UPF0213 protein YPK_3712 (95 aa).

The GIY-YIG domain maps to Ser4 to Lys79.

This sequence belongs to the UPF0213 family.

The protein is UPF0213 protein YPK_3712 of Yersinia pseudotuberculosis serotype O:3 (strain YPIII).